The following is a 365-amino-acid chain: Methylthioribose-1-phosphate isomerase (365 aa).

The active-site Proton donor is D249.

This sequence belongs to the eIF-2B alpha/beta/delta subunits family. MtnA subfamily.

It is found in the cytoplasm. The protein localises to the nucleus. The enzyme catalyses 5-(methylsulfanyl)-alpha-D-ribose 1-phosphate = 5-(methylsulfanyl)-D-ribulose 1-phosphate. It functions in the pathway amino-acid biosynthesis; L-methionine biosynthesis via salvage pathway; L-methionine from S-methyl-5-thio-alpha-D-ribose 1-phosphate: step 1/6. Its function is as follows. Catalyzes the interconversion of methylthioribose-1-phosphate (MTR-1-P) into methylthioribulose-1-phosphate (MTRu-1-P). The polypeptide is Methylthioribose-1-phosphate isomerase (Ostreococcus lucimarinus (strain CCE9901)).